A 263-amino-acid polypeptide reads, in one-letter code: LOB domain-containing protein 41 (263 aa).

The LOB domain maps to 3–109 (MSCNGCRVLR…VEAVMKGEPV (107 aa)). Positions 162-204 (TVAIQAESEGKSDEASHDSSLSHQSEIVAAHEGESKESESNVS) are disordered. 2 stretches are compositionally biased toward basic and acidic residues: residues 169–178 (SEGKSDEASH) and 190–200 (AAHEGESKESE).

It belongs to the LOB domain-containing protein family. In terms of tissue distribution, expressed in young shoots, roots, stems, leaves and flowers.

The polypeptide is LOB domain-containing protein 41 (LBD41) (Arabidopsis thaliana (Mouse-ear cress)).